The sequence spans 315 residues: D-alanine--D-alanine ligase B (315 aa).

Residues 109-309 (KKVAAAAGVV…FAELLSWMVE (201 aa)) enclose the ATP-grasp domain. 135 to 190 (PMKPPYVVKPVREGSSFGVVIVKEDQPHPPQVIGSADWKYGDEVMVEGYIAGRELT) is a binding site for ATP. Mg(2+)-binding residues include D259, E276, and N278.

It belongs to the D-alanine--D-alanine ligase family. The cofactor is Mg(2+). Requires Mn(2+) as cofactor.

The protein localises to the cytoplasm. The enzyme catalyses 2 D-alanine + ATP = D-alanyl-D-alanine + ADP + phosphate + H(+). Its pathway is cell wall biogenesis; peptidoglycan biosynthesis. Cell wall formation. In Brucella melitensis biotype 1 (strain ATCC 23456 / CCUG 17765 / NCTC 10094 / 16M), this protein is D-alanine--D-alanine ligase B.